The following is a 357-amino-acid chain: Dehydrogenase FUB6 (357 aa).

This sequence belongs to the zinc-containing alcohol dehydrogenase family. Quinone oxidoreductase subfamily.

The protein operates within mycotoxin biosynthesis. Functionally, dehydrogenase; part of the gene cluster that mediates the biosynthesis of fusaric acid, a mycotoxin with low to moderate toxicity to animals and humans, but with high phytotoxic properties. L-aspartate is suggested as fusaric acid amino acid precursor that is activated and further processed to O-acetyl-L-homoserine by cluster enzymes aspartate kinase FUB3 and homoserine O-acetyltransferase FUB5, as well as enzymes of the primary metabolism. The polyketide synthase (PKS) FUB1 generates the triketide trans-2-hexenal which is presumptively released by the hydrolase FUB4 and linked to the NRPS-bound amino acid precursor by NAD(P)-dependent dehydrogenase FUB6. FUB1, FUB4, and the non-canonical NRPS Fub8 may form an enzyme complex. Further processing of the NRPS-bound intermediate might be carried out by FUB6 and the O-acetylhomoserine FUB7, enabling a spontaneous electrocyclization to close the carbon backbone of fusaric acid. Dihydrofusaric acid is likely to be released via reduction by the thioester reductase (TR) domain of FUB8 whereupon the final oxidation to fusaric acid may (also) be performed by the FMN-dependent dehydrogenase FUB9. The chain is Dehydrogenase FUB6 from Gibberella moniliformis (strain M3125 / FGSC 7600) (Maize ear and stalk rot fungus).